Reading from the N-terminus, the 202-residue chain is MAGNLFVVAAPSGAGKTTLVRMLLEQESSVNLSISYTTRHPRPGEQNGREYHFVETPEFRAMIARQEFLEWAEVHGNFYGTSKKWIADQLAAGRDVLLEIDWQGAQQVRALFPQAIGVFILPPSMEELTRRLTGRGTDSPDVIDRRLAAAQAEMRHVGEFDYVIINDQLAQALDDLRAVVRASGLSFGAQRARHAALFERMI.

The Guanylate kinase-like domain maps to 3-181 (GNLFVVAAPS…ALDDLRAVVR (179 aa)). ATP is bound at residue 10–17 (APSGAGKT).

Belongs to the guanylate kinase family.

The protein localises to the cytoplasm. The catalysed reaction is GMP + ATP = GDP + ADP. Functionally, essential for recycling GMP and indirectly, cGMP. This chain is Guanylate kinase, found in Dechloromonas aromatica (strain RCB).